The sequence spans 895 residues: DNA mismatch repair protein MutS (895 aa).

607 to 614 (GPNMSGKS) lines the ATP pocket.

The protein belongs to the DNA mismatch repair MutS family.

Functionally, this protein is involved in the repair of mismatches in DNA. It is possible that it carries out the mismatch recognition step. This protein has a weak ATPase activity. In Bacillus cytotoxicus (strain DSM 22905 / CIP 110041 / 391-98 / NVH 391-98), this protein is DNA mismatch repair protein MutS.